The sequence spans 460 residues: 3-isopropylmalate dehydratase large subunit (460 aa).

[4Fe-4S] cluster is bound by residues Cys-338, Cys-398, and Cys-401.

Belongs to the aconitase/IPM isomerase family. LeuC type 1 subfamily. As to quaternary structure, heterodimer of LeuC and LeuD. It depends on [4Fe-4S] cluster as a cofactor.

It catalyses the reaction (2R,3S)-3-isopropylmalate = (2S)-2-isopropylmalate. It participates in amino-acid biosynthesis; L-leucine biosynthesis; L-leucine from 3-methyl-2-oxobutanoate: step 2/4. Its function is as follows. Catalyzes the isomerization between 2-isopropylmalate and 3-isopropylmalate, via the formation of 2-isopropylmaleate. This is 3-isopropylmalate dehydratase large subunit from Streptococcus gordonii (strain Challis / ATCC 35105 / BCRC 15272 / CH1 / DL1 / V288).